We begin with the raw amino-acid sequence, 1891 residues long: TATA-binding protein-associated factor mot1 (1891 aa).

One copy of the HEAT 1 repeat lies at 30 to 68 (PDELFNLLGRILPYLRSKSWDTRAAAAKAIGLIVANADT). Disordered stretches follow at residues 184–216 (FVASREHSIQGTSQPLASPIEPANGEESGLSKR), 241–283 (LSSR…LDRS), and 295–316 (FKGASVPENPLLQPESTEEGPN). Over residues 264–275 (ENGEERNGDSKP) the composition is skewed to basic and acidic residues. HEAT repeat units lie at residues 473–511 (SKLMDGVLEAVMKGLGDYDDDVRAVSAATLVPIAEEFVK) and 569–606 (SSFGKLVPRLYPFLRHTITSVRSAVLRALMTFLQLEGE). Residues 699-710 (SAAAPARSSPAS) are compositionally biased toward low complexity. Positions 699 to 740 (SAAAPARSSPASNTPEGTKGRRRKSEKKEAPPPSAHNVDGHM) are disordered. 4 HEAT repeats span residues 957–996 (PKKPSHIIKGMMDSIKKEENAELQQRSATAITSLVEYYTT), 1139–1177 (YPWVVDLLPLVVKALQCNLSVIRYAAAKCFATICSVITV), 1181–1216 (TMLVEKVLPMINDALDVHHRQGAVECIYHLIHVMED), and 1219–1257 (LPYVIFLVVPVLGRMSDSDNEVRLLATTSFATLVKLVPL). The region spanning 1316–1489 (AFLNRYNLHG…WSLFDFLMPG (174 aa)) is the Helicase ATP-binding domain. Position 1329-1336 (1329-1336 (DDMGLGKT)) interacts with ATP. A DEAH box motif is present at residues 1440–1443 (DEGH). An HEAT 8 repeat occupies 1526–1565 (EALHKQVLPFLLRRLKEEVLNDLPPKIIQNYYCDPSELQR). One can recognise a Helicase C-terminal domain in the interval 1663–1813 (DLSGASYVSP…STVVNQQNAG (151 aa)).

This sequence belongs to the SNF2/RAD54 helicase family. Forms the NCT transcriptional regulatory complex with nctA and nctB.

It localises to the nucleus. In terms of biological role, regulates transcription in association with TATA binding protein (TBP). Removes TBP from the TATA box via its C-terminal ATPase activity. Both transcription activation and repression require its ATPase activity. Part of the NCT transcriptional regulatory complex that acts as a key regulator of ergosterol biosynthesis and the azole exporter cdr1B. The NCT complex binds the promoters of genes linked to azole susceptibility, and especially represses the expression of cdr1B transporter. The sequence is that of TATA-binding protein-associated factor mot1 from Aspergillus fumigatus (strain ATCC MYA-4609 / CBS 101355 / FGSC A1100 / Af293) (Neosartorya fumigata).